Reading from the N-terminus, the 247-residue chain is Neurotrophic factor BDNF precursor form (247 aa).

Positions 1 to 18 (MTILFLTMVISYFGCMKA) are cleaved as a signal peptide. A propeptide spanning residues 19–128 (APMKEANIRG…AANMSMRVRR (110 aa)) is cleaved from the precursor. A glycan (N-linked (GlcNAc...) asparagine) is linked at Asn-121. Intrachain disulfides connect Cys-141/Cys-208, Cys-186/Cys-237, and Cys-196/Cys-239.

This sequence belongs to the NGF-beta family. Monomers and homodimers. Binds to NTRK2/TRKB. Can form heterodimers with other neurotrophin family members, such as NTF3 and NTF4 (in vitro), but the physiological relevance of this is not clear. BDNF precursor form: interacts with the heterodimer formed by NGFR and SORCS2. Post-translationally, N-glycosylated and glycosulfated, contrary to mature BDNF. In terms of processing, mature BDNF is produced by proteolytic removal of the propeptide, catalyzed by a FURIN family member. In addition, the precursor form is proteolytically cleaved within the propeptide, but this is not an obligatory intermediate for the production of mature BDNF. Can be converted into mature BDNF by plasmin (PLG). Detected in blood plasma and in saliva (at protein level). Brain. Highly expressed in hippocampus, amygdala, cerebral cortex and cerebellum. Also expressed in heart, lung, skeletal muscle, testis, prostate and placenta.

The protein localises to the secreted. In terms of biological role, important signaling molecule that activates signaling cascades downstream of NTRK2. During development, promotes the survival and differentiation of selected neuronal populations of the peripheral and central nervous systems. Participates in axonal growth, pathfinding and in the modulation of dendritic growth and morphology. Major regulator of synaptic transmission and plasticity at adult synapses in many regions of the CNS. The versatility of BDNF is emphasized by its contribution to a range of adaptive neuronal responses including long-term potentiation (LTP), long-term depression (LTD), certain forms of short-term synaptic plasticity, as well as homeostatic regulation of intrinsic neuronal excitability. Important signaling molecule that activates signaling cascades downstream of NTRK2. Activates signaling cascades via the heterodimeric receptor formed by NGFR and SORCS2. Signaling via NGFR and SORCS2 plays a role in synaptic plasticity and long-term depression (LTD). Binding to NGFR and SORCS2 promotes neuronal apoptosis. Promotes neuronal growth cone collapse. The polypeptide is Neurotrophic factor BDNF precursor form (Homo sapiens (Human)).